Reading from the N-terminus, the 136-residue chain is MSINEYYVYAGDYANPSHFEGNLIPDKVFNTPFEAWSWIESKNGFSYRYVEVTDWRGTKYPKDHYYVNPSKVNFLLFAGDNYYPCGGYDDLIAYAETEDKLRDIIKENENKPDYGSNRFDWWQIVNAHTHAIVDRG.

This is an uncharacterized protein from Enterobacteria phage T4 (Bacteriophage T4).